The chain runs to 204 residues: Ribosome maturation factor RimP (204 aa).

Belongs to the RimP family.

It localises to the cytoplasm. Required for maturation of 30S ribosomal subunits. The chain is Ribosome maturation factor RimP from Albidiferax ferrireducens (strain ATCC BAA-621 / DSM 15236 / T118) (Rhodoferax ferrireducens).